The following is a 580-amino-acid chain: Laccase-5 (580 aa).

Residues 1–25 form the signal peptide; the sequence is MDVTKSLLCFISFVAFLLFSSVAEA. 2 Plastocyanin-like domains span residues 34 to 150 and 160 to 312; these read IIQA…PPAG and RNVP…YKSA. N-linked (GlcNAc...) asparagine glycosylation is present at asparagine 80. Histidine 84, histidine 86, histidine 129, and histidine 131 together coordinate Cu cation. N-linked (GlcNAc...) asparagine glycosylation is found at asparagine 189, asparagine 300, asparagine 340, asparagine 392, asparagine 402, asparagine 410, and asparagine 443. The 137-residue stretch at 428 to 564 folds into the Plastocyanin-like 3 domain; sequence DFPAKPPVKF…AMAFLVENGN (137 aa). The Cu cation site is built by histidine 481, histidine 484, histidine 486, histidine 543, cysteine 544, histidine 545, and histidine 549.

Belongs to the multicopper oxidase family. It depends on Cu cation as a cofactor. As to expression, ubiquitous and constitutive.

Its subcellular location is the secreted. It localises to the extracellular space. The protein resides in the apoplast. The enzyme catalyses 4 hydroquinone + O2 = 4 benzosemiquinone + 2 H2O. Lignin degradation and detoxification of lignin-derived products. This Arabidopsis thaliana (Mouse-ear cress) protein is Laccase-5 (LAC5).